An 89-amino-acid polypeptide reads, in one-letter code: Phosphocarrier protein HPr (89 aa).

Residues 1 to 88 (MLEHELTVTN…ELFENRFNED (88 aa)) enclose the HPr domain. Histidine 15 functions as the Pros-phosphohistidine intermediate in the catalytic mechanism. Serine 46 bears the Phosphoserine; by HPrK/P mark.

This sequence belongs to the HPr family.

The protein localises to the cytoplasm. Phosphorylation on Ser-46 inhibits the phosphoryl transfer from enzyme I to HPr. General (non sugar-specific) component of the phosphoenolpyruvate-dependent sugar phosphotransferase system (sugar PTS). This major carbohydrate active-transport system catalyzes the phosphorylation of incoming sugar substrates concomitantly with their translocation across the cell membrane. The phosphoryl group from phosphoenolpyruvate (PEP) is transferred to the phosphoryl carrier protein HPr by enzyme I. Phospho-HPr then transfers it to the PTS EIIA domain. This chain is Phosphocarrier protein HPr (ptsH), found in Xylella fastidiosa (strain Temecula1 / ATCC 700964).